The sequence spans 153 residues: Endoribonuclease YbeY (153 aa).

Zn(2+) contacts are provided by H119, H123, and H129.

It belongs to the endoribonuclease YbeY family. The cofactor is Zn(2+).

The protein resides in the cytoplasm. Its function is as follows. Single strand-specific metallo-endoribonuclease involved in late-stage 70S ribosome quality control and in maturation of the 3' terminus of the 16S rRNA. The sequence is that of Endoribonuclease YbeY from Desulforamulus reducens (strain ATCC BAA-1160 / DSM 100696 / MI-1) (Desulfotomaculum reducens).